Here is a 269-residue protein sequence, read N- to C-terminus: Hydroxyethylthiazole kinase (269 aa).

A substrate-binding site is contributed by Met-45. The ATP site is built by Arg-121 and Thr-167. Gly-194 contributes to the substrate binding site.

It belongs to the Thz kinase family. Requires Mg(2+) as cofactor.

The enzyme catalyses 5-(2-hydroxyethyl)-4-methylthiazole + ATP = 4-methyl-5-(2-phosphooxyethyl)-thiazole + ADP + H(+). It functions in the pathway cofactor biosynthesis; thiamine diphosphate biosynthesis; 4-methyl-5-(2-phosphoethyl)-thiazole from 5-(2-hydroxyethyl)-4-methylthiazole: step 1/1. In terms of biological role, catalyzes the phosphorylation of the hydroxyl group of 4-methyl-5-beta-hydroxyethylthiazole (THZ). The protein is Hydroxyethylthiazole kinase of Bacillus cereus (strain ATCC 14579 / DSM 31 / CCUG 7414 / JCM 2152 / NBRC 15305 / NCIMB 9373 / NCTC 2599 / NRRL B-3711).